The primary structure comprises 252 residues: tRNA uridine(34) hydroxylase (252 aa).

In terms of domain architecture, Rhodanese spans 129 to 223 (QGRPVVMLDT…YFEETGGKGF (95 aa)). Catalysis depends on C183, which acts as the Cysteine persulfide intermediate.

The protein belongs to the TrhO family.

It catalyses the reaction uridine(34) in tRNA + AH2 + O2 = 5-hydroxyuridine(34) in tRNA + A + H2O. Its function is as follows. Catalyzes oxygen-dependent 5-hydroxyuridine (ho5U) modification at position 34 in tRNAs. The chain is tRNA uridine(34) hydroxylase from Bordetella petrii (strain ATCC BAA-461 / DSM 12804 / CCUG 43448).